The primary structure comprises 577 residues: MGTRLLALAPWLLLLLLQLAGASHVVHRSLEAEQAPSSVPASIVSPLLRTGYHFQPPMNWINDPNGPLYYKGWYHLFYQYNPKGAVWGNIVWAHSVSQDLINWIALEPAIKPDIPSDQYGCWSGSATILPDGTPAILYTGIDRPNINYQVQNIAFPKNASDPLLREWVKPAYNPVATPEPGMNATQFRDPTTAWYADGHWRMLVGGLKGARRGLAYLYRSRDFKTWVRAKHPLHSALTGMWECPDFFPLQAPGLQAGLDTSVPSSKYVLKNSLDLTRYDYYTVGIYNKVTERYVPDNPAGDYHRLRYDYGNFYASKTFFDPVKHRRILLGWANESDSVTYDKAKGWAGIHAIPRKVWLDPSGKQLLQWPIEELEKLRGKSVSVSDKVVKPGEHFQVTGLGTYQADVEVSLEVSGLEKAEALDPAFGDDAERLCGAKGADVRGGVVFGLWVLASAGLEEKTAVFFRVFKPAGHGAKPVVLMCTDPTKSSLSPDLYKPTFAGFVDTDISSGKISLRSLIDRSVVESFGAGGKTCILSRVYPSMAIGDKAHLYVFNNGEADIKISHLKAWEMKKPLMNGA.

The signal sequence occupies residues 1–22 (MGTRLLALAPWLLLLLLQLAGA). Residue Asp63 is part of the active site. Asn158, Asn183, and Asn333 each carry an N-linked (GlcNAc...) asparagine glycan.

Belongs to the glycosyl hydrolase 32 family.

Its subcellular location is the secreted. The protein localises to the extracellular space. It localises to the apoplast. It is found in the cell wall. The catalysed reaction is Hydrolysis of terminal non-reducing beta-D-fructofuranoside residues in beta-D-fructofuranosides.. Functionally, may play a role in sucrose partitioning during seed development and in stress response. The chain is Beta-fructofuranosidase, insoluble isoenzyme 1 (CIN1) from Oryza sativa subsp. indica (Rice).